A 1101-amino-acid chain; its full sequence is MDMDMDTSPSYFDPEALSVRDQFRRYRKRHSTSPHEEMLSSNVSENRLLYDGHNIHSPTNTALLLENIKEEVDNFHTDHYEGTPTNPISASRRESVGILNDDDEALFRRVESQSLKACKIENDELAESGDTTFALFASLFDSALQGLMSIPNLMLRLEESCRNVSQSIRYGSDIRHRAVEDKLMRQKAQLLLGEAASWSLLWNLYGKGTDEVPENLILIPSTSHLEACQFVLNDHTAQLCLRIVMWLEELASKSLDLERKVQGSHVGTYLPNAGVWHHTQRYLKKNGSNADTLHHLDFDAPTREHARLLPDDYKQDESVLEDVWTLIRAGRIEEACDLCRSAGQSWRAATLCPFSGMDMFPSIEALVKNGENRTLQAIEQESGFGNQLRLWKWASYCASEKIAEQDGGKHEVAVFATQCSNLNRMLPICTDWESACWAMAKSWLDVQVDLELAQSKPGLTERFKSCIDESPEATQNGCQASFGPEDWPLHVLNQQPRDLPALLQKLHSGEMVHEAVVRGCKEQHRQIQMNLMLGDISHLLDIIWSWIAPLEDDQSNFRPHGDPHMIKFGAHMVLVLRLLFTDEINDSFKEKLNNVGDLILHMYAMFLFSKQHEELVGIYASQLARHRCIELFVHMMELRMHSSVHVKYKIFLSAMEYLSFSPVDDLHGNFEEIVDRVLSRSREIKLAKYDPSIDVAEQHRQQSLQKAIAIQWLCFTPPSTIKDVKDVTSKLLLRSLMHSNILFREFALIAMWRVPATPVGAHTLLSYLAEPLKQLSENPDTLEDYVSENLQEFQDWNEYYSCDAKYRNWLKFQLENAEVTELSEEENQKAVVAAKETLDSSLSLLLRQDNPWMTFLEDHVFESEEYLFLELHATAMLCLPSGECLRPDATVCAALMSALYSSVSEEVVLDRQLMVNVSISSRDSYCIEVVLRCLAIKGDGLGPHNANDGGILSAVAAAGFKGSDIYGTYFSFTYDLPPFSIEIWGCELTRFQAGVTMDISRLDAWYSSKEGSLETPATYIVRGLCRRCCLPELVLRSMQVSVSLMESGNPPEDHDELIELVASDETGFLSLFSRQQLQEFMLFEREYRMSQLELQEELSSP.

It belongs to the nucleoporin Nup84/Nup107 family. Part of the nuclear pore complex (NPC). The NPC has an eight-fold symmetrical structure comprising a central transport channel and two rings, the cytoplasmic and nuclear rings, to which eight filaments are attached. The cytoplasmic filaments have loose ends, while the nuclear filaments are joined in a distal ring, forming a nuclear basket. NPCs are highly dynamic in configuration and composition, and can be devided in 3 subcomplexes, the NUP62 subcomplex, the NUP107-160 subcomplex and the NUP93 subcomplex, containing approximately 30 different nucleoporin proteins.

It is found in the nucleus envelope. It localises to the nucleus. The protein localises to the nuclear pore complex. This chain is Nuclear pore complex protein NUP107, found in Arabidopsis thaliana (Mouse-ear cress).